The sequence spans 203 residues: Cryptic neisserial protein 1 (203 aa).

The N-terminal stretch at 1–18 (MRRAILLILTLTVGTSLA) is a signal peptide.

The protein belongs to the Cnp family.

It is found in the periplasm. Its subcellular location is the cytoplasm. The chain is Cryptic neisserial protein 1 from Neisseria gonorrhoeae (strain ATCC 700825 / FA 1090).